The chain runs to 81 residues: ATP synthase subunit c, chloroplastic (81 aa).

Transmembrane regions (helical) follow at residues P3–G23 and L57–A77.

Belongs to the ATPase C chain family. In terms of assembly, F-type ATPases have 2 components, F(1) - the catalytic core - and F(0) - the membrane proton channel. F(1) has five subunits: alpha(3), beta(3), gamma(1), delta(1), epsilon(1). F(0) has four main subunits: a(1), b(1), b'(1) and c(10-14). The alpha and beta chains form an alternating ring which encloses part of the gamma chain. F(1) is attached to F(0) by a central stalk formed by the gamma and epsilon chains, while a peripheral stalk is formed by the delta, b and b' chains.

The protein resides in the plastid. It localises to the chloroplast thylakoid membrane. In terms of biological role, f(1)F(0) ATP synthase produces ATP from ADP in the presence of a proton or sodium gradient. F-type ATPases consist of two structural domains, F(1) containing the extramembraneous catalytic core and F(0) containing the membrane proton channel, linked together by a central stalk and a peripheral stalk. During catalysis, ATP synthesis in the catalytic domain of F(1) is coupled via a rotary mechanism of the central stalk subunits to proton translocation. Its function is as follows. Key component of the F(0) channel; it plays a direct role in translocation across the membrane. A homomeric c-ring of between 10-14 subunits forms the central stalk rotor element with the F(1) delta and epsilon subunits. The polypeptide is ATP synthase subunit c, chloroplastic (Pinus koraiensis (Korean pine)).